The following is a 65-amino-acid chain: Large ribosomal subunit protein uL29 (65 aa).

It belongs to the universal ribosomal protein uL29 family.

The sequence is that of Large ribosomal subunit protein uL29 from Brevibacillus brevis (strain 47 / JCM 6285 / NBRC 100599).